We begin with the raw amino-acid sequence, 239 residues long: Orotidine 5'-phosphate decarboxylase (239 aa).

Substrate contacts are provided by residues Asp-10, Lys-32, 59-68 (DLKLHDIPNT), Thr-122, Arg-184, Gln-193, Gly-213, and Arg-214. Lys-61 (proton donor) is an active-site residue.

The protein belongs to the OMP decarboxylase family. Type 1 subfamily. In terms of assembly, homodimer.

The enzyme catalyses orotidine 5'-phosphate + H(+) = UMP + CO2. The protein operates within pyrimidine metabolism; UMP biosynthesis via de novo pathway; UMP from orotate: step 2/2. Functionally, catalyzes the decarboxylation of orotidine 5'-monophosphate (OMP) to uridine 5'-monophosphate (UMP). This chain is Orotidine 5'-phosphate decarboxylase, found in Geobacillus thermodenitrificans (strain NG80-2).